The chain runs to 202 residues: FMN-dependent NADH:quinone oxidoreductase (202 aa).

Residues Ser10, 16-18 (SHS), and 96-99 (MYNF) each bind FMN.

The protein belongs to the azoreductase type 1 family. In terms of assembly, homodimer. Requires FMN as cofactor.

It catalyses the reaction 2 a quinone + NADH + H(+) = 2 a 1,4-benzosemiquinone + NAD(+). The enzyme catalyses N,N-dimethyl-1,4-phenylenediamine + anthranilate + 2 NAD(+) = 2-(4-dimethylaminophenyl)diazenylbenzoate + 2 NADH + 2 H(+). Functionally, quinone reductase that provides resistance to thiol-specific stress caused by electrophilic quinones. Its function is as follows. Also exhibits azoreductase activity. Catalyzes the reductive cleavage of the azo bond in aromatic azo compounds to the corresponding amines. This Hydrogenovibrio crunogenus (strain DSM 25203 / XCL-2) (Thiomicrospira crunogena) protein is FMN-dependent NADH:quinone oxidoreductase.